Here is a 425-residue protein sequence, read N- to C-terminus: E3 ubiquitin-protein ligase TRIM31 (425 aa).

The RING-type zinc finger occupies 16–57 (CPICLDILQKPVTIDCGHNFCLKCITQIGETSCGFFKCPLCK). The segment at 90–131 (RKEATCPRHQEMFHYFCEDDGKFLCFVCRESKDHKSHNVSLI) adopts a B box-type zinc-finger fold. Residues Cys95, His98, Cys117, and His123 each contribute to the Zn(2+) site. 2 coiled-coil regions span residues 126–162 (HNVSLIEEAAQNYQGQIQEQIQVLQQKEKETVQVKAQ) and 270–307 (LELEKKLSEAKSRHDSITGSLKKFKDQLQADRKKDENR). The tract at residues 328-360 (HKMNKTSEPGSSSAGGRTTSGPPNHHSSAPSHS) is disordered. Residues 336-360 (PGSSSAGGRTTSGPPNHHSSAPSHS) show a composition bias toward low complexity.

This sequence belongs to the TRIM/RBCC family. May form oligomers. Interacts with isoform p52shc of SHC1. Auto-ubiquitinated (in vitro). As to expression, up-regulated in gastric adenocarcinomas.

It is found in the cytoplasm. It localises to the mitochondrion. The enzyme catalyses S-ubiquitinyl-[E2 ubiquitin-conjugating enzyme]-L-cysteine + [acceptor protein]-L-lysine = [E2 ubiquitin-conjugating enzyme]-L-cysteine + N(6)-ubiquitinyl-[acceptor protein]-L-lysine.. It functions in the pathway protein modification; protein ubiquitination. E3 ubiquitin-protein ligase that acts as a regulator of antiviral immune response and inflammation by mediating ubiquitination of substrates. Acts as a regulator of innate immune defense against viruses by mediating 'Lys-63'-linked ubiquitination of MAVS, promoting MAVS polymerization and formation of three-stranded helical filaments on mitochondria. Acts as a negative regulator of the NLRP3 inflammasome by catalyzing 'Lys-48'-linked ubiquitination of NLRP3, leading to its degradation. Regulator of Src-induced anchorage independent cell growth. The polypeptide is E3 ubiquitin-protein ligase TRIM31 (Homo sapiens (Human)).